We begin with the raw amino-acid sequence, 226 residues long: Ribosomal RNA small subunit methyltransferase G (226 aa).

Residues G95, L100, 146-147, and R159 each bind S-adenosyl-L-methionine; that span reads VE.

The protein belongs to the methyltransferase superfamily. RNA methyltransferase RsmG family.

It localises to the cytoplasm. The enzyme catalyses guanosine(527) in 16S rRNA + S-adenosyl-L-methionine = N(7)-methylguanosine(527) in 16S rRNA + S-adenosyl-L-homocysteine. Specifically methylates the N7 position of guanine in position 527 of 16S rRNA. The polypeptide is Ribosomal RNA small subunit methyltransferase G (Acidovorax ebreus (strain TPSY) (Diaphorobacter sp. (strain TPSY))).